Reading from the N-terminus, the 862-residue chain is Taxadiene synthase (862 aa).

Mg(2+) contacts are provided by aspartate 613, aspartate 617, asparagine 757, threonine 761, and glutamate 765. The DDXXD motif motif lies at 613–617; sequence DDMAD.

It belongs to the terpene synthase family. Mg(2+) serves as cofactor.

The enzyme catalyses (2E,6E,10E)-geranylgeranyl diphosphate = taxa-4(5),11(12)-diene + diphosphate. Its pathway is alkaloid biosynthesis; taxol biosynthesis; taxa-4(20),11-dien-5alpha-ol from geranylgeranyl diphosphate: step 1/2. Functionally, catalyzes the cyclization of the ubiquitous isoprenoid intermediate geranylgeranyl diphosphate to taxa-4,11-diene, the parent olefin with a taxane skeleton. The protein is Taxadiene synthase (TDC1) of Taxus brevifolia (Pacific yew).